Here is a 418-residue protein sequence, read N- to C-terminus: Phosphoglycerate kinase (418 aa).

Residues 18-20 (DFN), R34, 57-60 (HLGR), R115, and R171 contribute to the substrate site. Residues K224, G315, E346, and 375-378 (GGDS) each bind ATP.

The protein belongs to the phosphoglycerate kinase family. As to quaternary structure, monomer.

It is found in the cytoplasm. It catalyses the reaction (2R)-3-phosphoglycerate + ATP = (2R)-3-phospho-glyceroyl phosphate + ADP. Its pathway is carbohydrate degradation; glycolysis; pyruvate from D-glyceraldehyde 3-phosphate: step 2/5. The sequence is that of Phosphoglycerate kinase from Porphyromonas gingivalis (strain ATCC BAA-308 / W83).